A 532-amino-acid polypeptide reads, in one-letter code: Phosphoribosylamine--glycine ligase, chloroplastic (532 aa).

The transit peptide at 1–75 (MSSLCASNCY…IQRRLFLLRC (75 aa)) directs the protein to the chloroplast. Residues 204–412 (KNLCHKYNIP…LAKVLLAACK (209 aa)) enclose the ATP-grasp domain.

The protein belongs to the GARS family.

It is found in the plastid. Its subcellular location is the chloroplast. It catalyses the reaction 5-phospho-beta-D-ribosylamine + glycine + ATP = N(1)-(5-phospho-beta-D-ribosyl)glycinamide + ADP + phosphate + H(+). Its pathway is purine metabolism; IMP biosynthesis via de novo pathway; N(1)-(5-phospho-D-ribosyl)glycinamide from 5-phospho-alpha-D-ribose 1-diphosphate: step 2/2. The protein is Phosphoribosylamine--glycine ligase, chloroplastic (PUR2) of Arabidopsis thaliana (Mouse-ear cress).